A 125-amino-acid polypeptide reads, in one-letter code: Neuropeptide B (125 aa).

Positions 1–24 are cleaved as a signal peptide; that stretch reads MARSATLAAAALALCLLLAPPGLA. Residues 54–73 are disordered; sequence RRSQPYRGAEPPGGAGASPE. Residues 56–125 constitute a propeptide that is removed on maturation; it reads SQPYRGAEPP…SLRAADCLAA (70 aa).

This sequence belongs to the neuropeptide B/W family. As to expression, widely expressed in the central nervous system. High levels are found in substantia nigra, hypothalamus, hippocampus, spinal cord, placenta and fetal brain; lower levels are found in testis, uterus and ovary. Also detected at high levels in colorectal adenocarcinoma.

It is found in the secreted. May be involved in the regulation of feeding, neuroendocrine system, memory, learning and in the afferent pain pathway. The sequence is that of Neuropeptide B (NPB) from Homo sapiens (Human).